The chain runs to 221 residues: UPF0758 protein PC1_4100 (221 aa).

Positions 99–221 constitute an MPN domain; it reads AMLNPQATGQ…YVSFAERGWI (123 aa). Positions 170, 172, and 183 each coordinate Zn(2+). Residues 170–183 carry the JAMM motif motif; sequence HNHPSGKAEPSQAD.

It belongs to the UPF0758 family. YicR subfamily.

The protein is UPF0758 protein PC1_4100 of Pectobacterium carotovorum subsp. carotovorum (strain PC1).